We begin with the raw amino-acid sequence, 499 residues long: Ribose import ATP-binding protein RbsA (499 aa).

ABC transporter domains lie at 3 to 240 (VEMT…VGRA) and 250 to 494 (LTPG…TGGD). Residue 35 to 42 (GENGAGKS) coordinates ATP.

It belongs to the ABC transporter superfamily. Ribose importer (TC 3.A.1.2.1) family. In terms of assembly, the complex is composed of an ATP-binding protein (RbsA), two transmembrane proteins (RbsC) and a solute-binding protein (RbsB).

The protein localises to the cell membrane. The enzyme catalyses D-ribose(out) + ATP + H2O = D-ribose(in) + ADP + phosphate + H(+). Functionally, part of the ABC transporter complex RbsABC involved in ribose import. Responsible for energy coupling to the transport system. The sequence is that of Ribose import ATP-binding protein RbsA from Halalkalibacterium halodurans (strain ATCC BAA-125 / DSM 18197 / FERM 7344 / JCM 9153 / C-125) (Bacillus halodurans).